Reading from the N-terminus, the 301-residue chain is NAD kinase (301 aa).

Catalysis depends on Asp-84, which acts as the Proton acceptor. Residues 84–85 (DG), Arg-89, 158–159 (NE), Lys-169, Asn-188, 199–204 (TAYSFS), and Gln-258 each bind NAD(+).

The protein belongs to the NAD kinase family. A divalent metal cation serves as cofactor.

Its subcellular location is the cytoplasm. The enzyme catalyses NAD(+) + ATP = ADP + NADP(+) + H(+). Functionally, involved in the regulation of the intracellular balance of NAD and NADP, and is a key enzyme in the biosynthesis of NADP. Catalyzes specifically the phosphorylation on 2'-hydroxyl of the adenosine moiety of NAD to yield NADP. In Tropheryma whipplei (strain Twist) (Whipple's bacillus), this protein is NAD kinase.